Here is an 887-residue protein sequence, read N- to C-terminus: Probable LRR receptor-like serine/threonine-protein kinase At5g59680 (887 aa).

The N-terminal stretch at 1–23 (MERSLELLLLLIRTLAIIHISQA) is a signal peptide. Residues 25–510 (SQQGFISLDC…TKSGKSFPVT (486 aa)) are Extracellular-facing. N-linked (GlcNAc...) asparagine glycans are attached at residues N143, N230, N256, N289, N338, N363, N400, N416, N432, N445, N464, and N471. LRR repeat units follow at residues 411 to 434 (RITT…QNLT), 435 to 457 (TLEK…LSNM), and 459 to 481 (SLLV…LQRK). A helical membrane pass occupies residues 511-531 (IVASVGSAAILIVVLVLVLFL). Residues 532-887 (RKKKPSAVEV…FDAEMIPRAR (356 aa)) are Cytoplasmic-facing. Residue T571 is modified to Phosphothreonine. One can recognise a Protein kinase domain in the interval 580–853 (NNFGRVVGEG…HVVIELKECL (274 aa)). Residues 586-594 (VGEGGFGVV) and K608 each bind ATP. Y653 carries the post-translational modification Phosphotyrosine. D705 acts as the Proton acceptor in catalysis. S739 carries the post-translational modification Phosphoserine. Phosphothreonine occurs at positions 740 and 745. Residue Y753 is modified to Phosphotyrosine.

The protein belongs to the protein kinase superfamily. Ser/Thr protein kinase family.

Its subcellular location is the membrane. The enzyme catalyses L-seryl-[protein] + ATP = O-phospho-L-seryl-[protein] + ADP + H(+). The catalysed reaction is L-threonyl-[protein] + ATP = O-phospho-L-threonyl-[protein] + ADP + H(+). This Arabidopsis thaliana (Mouse-ear cress) protein is Probable LRR receptor-like serine/threonine-protein kinase At5g59680.